The primary structure comprises 719 residues: DNA polymerase epsilon subunit B (719 aa).

The disordered stretch occupies residues 107 to 147 (SIPPKTKTYNNGGGKTTTIDRFLTKRPSPSDNDEGPLDQSI).

This sequence belongs to the DNA polymerase epsilon subunit B family. As to quaternary structure, heterotetramer. Consists of four subunits: POL2, DPB2, DPB3 and DPB4.

The protein resides in the nucleus. Its function is as follows. As accessory component of the DNA polymerase epsilon (DNA polymerase II) participates in chromosomal DNA replication. This chain is DNA polymerase epsilon subunit B (DPB2), found in Candida glabrata (strain ATCC 2001 / BCRC 20586 / JCM 3761 / NBRC 0622 / NRRL Y-65 / CBS 138) (Yeast).